The chain runs to 397 residues: Nicotinate phosphoribosyltransferase (397 aa).

Histidine 221 is modified (phosphohistidine; by autocatalysis).

This sequence belongs to the NAPRTase family. Transiently phosphorylated on a His residue during the reaction cycle. Phosphorylation strongly increases the affinity for substrates and increases the rate of nicotinate D-ribonucleotide production. Dephosphorylation regenerates the low-affinity form of the enzyme, leading to product release.

It catalyses the reaction nicotinate + 5-phospho-alpha-D-ribose 1-diphosphate + ATP + H2O = nicotinate beta-D-ribonucleotide + ADP + phosphate + diphosphate. It functions in the pathway cofactor biosynthesis; NAD(+) biosynthesis; nicotinate D-ribonucleotide from nicotinate: step 1/1. Catalyzes the synthesis of beta-nicotinate D-ribonucleotide from nicotinate and 5-phospho-D-ribose 1-phosphate at the expense of ATP. This chain is Nicotinate phosphoribosyltransferase, found in Herminiimonas arsenicoxydans.